We begin with the raw amino-acid sequence, 493 residues long: MYRLSQYETPLFTALVEHSKRNPIQFHIPGHKKGQGMDPEFREFIGHNALAIDLINIAPLDDLHHPKGMIKEAQDLAAAAFGADHTFFSIQGTSGAIMTMVMSVCGPGDKILVPRNVHKSVMSAIIFSGAKPIFMHPEIDPKLGISHGITIQSVKKALEEHSDAKGLLVINPTYFGFAADLEQIVQLAHSYDIPVLVDEAHGVHIHFHDELPMSAMQAGADMAATSVHKLGGSLTQSSILNVKEGLVNVKHVQSIISMLTTTSTSYILLASLDVARKRLATEGKALIEQTIQLAEQVRNAINDIEHLYCPGKEMLGTDATFNYDPTKIIVSVKDLGITGHQAEVWLREQYNIEVELSDLYNILCLVTFGDTESETNTLIAALQDLSAIFKNKADKGVRIQVEIPEIPVLALSPRDAFYSETEVIPFENAAGRIIADFVMVYPPGIPIFTPGEIITQDNLEYIRKNLEAGLPVQGPEDMTLQTLRVIKEYKPIS.

K229 carries the N6-(pyridoxal phosphate)lysine modification.

The protein belongs to the Orn/Lys/Arg decarboxylase class-I family. Requires pyridoxal 5'-phosphate as cofactor.

It localises to the cytoplasm. It catalyses the reaction L-arginine + H(+) = agmatine + CO2. It participates in amine and polyamine biosynthesis; agmatine biosynthesis; agmatine from L-arginine: step 1/1. Its function is as follows. Catalyzes the formation of agmatine from arginine. The polypeptide is Arginine decarboxylase (speA) (Bacillus anthracis).